Here is a 247-residue protein sequence, read N- to C-terminus: tRNA pseudouridine synthase A (247 aa).

Catalysis depends on D52, which acts as the Nucleophile. Residue Y113 coordinates substrate.

Belongs to the tRNA pseudouridine synthase TruA family. As to quaternary structure, homodimer.

It carries out the reaction uridine(38/39/40) in tRNA = pseudouridine(38/39/40) in tRNA. In terms of biological role, formation of pseudouridine at positions 38, 39 and 40 in the anticodon stem and loop of transfer RNAs. This chain is tRNA pseudouridine synthase A, found in Sinorhizobium medicae (strain WSM419) (Ensifer medicae).